Reading from the N-terminus, the 440-residue chain is Ribosomal protein uS12 methylthiotransferase RimO (440 aa).

Positions 6-116 (PKVGFVSLGC…VVTAVHEVVP (111 aa)) constitute an MTTase N-terminal domain. C15, C51, C80, C149, C153, and C156 together coordinate [4Fe-4S] cluster. Residues 135–373 (LTPRHYAYLK…MAHQQAISAA (239 aa)) enclose the Radical SAM core domain. Residues 376–440 (QLKVGKEIEV…DEYDLWAELV (65 aa)) enclose the TRAM domain.

Belongs to the methylthiotransferase family. RimO subfamily. [4Fe-4S] cluster serves as cofactor.

Its subcellular location is the cytoplasm. The enzyme catalyses L-aspartate(89)-[ribosomal protein uS12]-hydrogen + (sulfur carrier)-SH + AH2 + 2 S-adenosyl-L-methionine = 3-methylsulfanyl-L-aspartate(89)-[ribosomal protein uS12]-hydrogen + (sulfur carrier)-H + 5'-deoxyadenosine + L-methionine + A + S-adenosyl-L-homocysteine + 2 H(+). Functionally, catalyzes the methylthiolation of an aspartic acid residue of ribosomal protein uS12. This Pseudomonas aeruginosa (strain UCBPP-PA14) protein is Ribosomal protein uS12 methylthiotransferase RimO.